The primary structure comprises 254 residues: MTLLAIDIGNTRLKWALYPSAVPGSEPVAHGARFLETIDQLGEAEWAGLAPPPRHVLGCCVASDSVRHRVEEQLELWDVAPRWVVPGAAEAGVTNGYDHPMRLGSDRWVALIGARARVLAAGARRPVLVVMAGTAVTVDALDADGRFLGGLILPGHGIMLRALEAGTAGLRVPTGEVREFPTNTSDALTSGGNFAIAGAIERMHRHLQQRCGEPPLCIVTGGAGWKVVPALTIDHELIDTLIFDGLLTIAAQRG.

Residue 7–14 (DIGNTRLK) participates in ATP binding. Residues tyrosine 97 and 104–107 (GSDR) each bind substrate. The Proton acceptor role is filled by aspartate 106. Position 134 (threonine 134) interacts with ATP. Threonine 184 is a substrate binding site.

It belongs to the type III pantothenate kinase family. As to quaternary structure, homodimer. The cofactor is NH4(+). Requires K(+) as cofactor.

Its subcellular location is the cytoplasm. It catalyses the reaction (R)-pantothenate + ATP = (R)-4'-phosphopantothenate + ADP + H(+). The protein operates within cofactor biosynthesis; coenzyme A biosynthesis; CoA from (R)-pantothenate: step 1/5. Functionally, catalyzes the phosphorylation of pantothenate (Pan), the first step in CoA biosynthesis. The protein is Type III pantothenate kinase of Methylibium petroleiphilum (strain ATCC BAA-1232 / LMG 22953 / PM1).